The primary structure comprises 426 residues: UPF0597 protein CLB_1750 (426 aa).

This sequence belongs to the UPF0597 family.

The chain is UPF0597 protein CLB_1750 from Clostridium botulinum (strain ATCC 19397 / Type A).